We begin with the raw amino-acid sequence, 863 residues long: Leucine--tRNA ligase (863 aa).

The short motif at P42 to H52 is the 'HIGH' region element. The 'KMSKS' region motif lies at K622–S626. K625 is an ATP binding site.

Belongs to the class-I aminoacyl-tRNA synthetase family.

The protein resides in the cytoplasm. It catalyses the reaction tRNA(Leu) + L-leucine + ATP = L-leucyl-tRNA(Leu) + AMP + diphosphate. This is Leucine--tRNA ligase from Shewanella frigidimarina (strain NCIMB 400).